The sequence spans 284 residues: Nitrogenase iron protein 1 (284 aa).

17 to 24 contacts ATP; sequence GKGGIGKS. C105 is a binding site for [4Fe-4S] cluster. At R108 the chain carries ADP-ribosylarginine; by dinitrogenase reductase ADP-ribosyltransferase. C140 is a [4Fe-4S] cluster binding site.

This sequence belongs to the NifH/BchL/ChlL family. As to quaternary structure, homodimer. It depends on [4Fe-4S] cluster as a cofactor. In terms of processing, the reversible ADP-ribosylation of Arg-108 inactivates the nitrogenase reductase and regulates nitrogenase activity.

The catalysed reaction is N2 + 8 reduced [2Fe-2S]-[ferredoxin] + 16 ATP + 16 H2O = H2 + 8 oxidized [2Fe-2S]-[ferredoxin] + 2 NH4(+) + 16 ADP + 16 phosphate + 6 H(+). The key enzymatic reactions in nitrogen fixation are catalyzed by the nitrogenase complex, which has 2 components: the iron protein and the molybdenum-iron protein. The sequence is that of Nitrogenase iron protein 1 (nifH1) from Methanothermococcus thermolithotrophicus (Methanococcus thermolithotrophicus).